Reading from the N-terminus, the 453-residue chain is tRNA modification GTPase MnmE (453 aa).

Positions 22, 79, and 119 each coordinate (6S)-5-formyl-5,6,7,8-tetrahydrofolate. A TrmE-type G domain is found at 215–376 (GMKVVIAGRP…LRNHLKECMG (162 aa)). Asn225 contributes to the K(+) binding site. GTP-binding positions include 225-230 (NAGKSS), 244-250 (TDIAGTT), 269-272 (DTAG), and 334-337 (NKAD). Ser229 provides a ligand contact to Mg(2+). Thr244, Ile246, and Thr249 together coordinate K(+). Thr250 serves as a coordination point for Mg(2+). Lys453 is a (6S)-5-formyl-5,6,7,8-tetrahydrofolate binding site.

It belongs to the TRAFAC class TrmE-Era-EngA-EngB-Septin-like GTPase superfamily. TrmE GTPase family. In terms of assembly, homodimer. Heterotetramer of two MnmE and two MnmG subunits. It depends on K(+) as a cofactor.

It localises to the cytoplasm. In terms of biological role, exhibits a very high intrinsic GTPase hydrolysis rate. Involved in the addition of a carboxymethylaminomethyl (cmnm) group at the wobble position (U34) of certain tRNAs, forming tRNA-cmnm(5)s(2)U34. The sequence is that of tRNA modification GTPase MnmE from Vibrio vulnificus (strain CMCP6).